Reading from the N-terminus, the 415-residue chain is UDP-galactose transporter homolog 1 (415 aa).

The tract at residues 1–39 is disordered; that stretch reads MHLVPEGSESMSTQQNGSAQKPVTLNGSASTKGQAPEAP. The segment covering 9–33 has biased composition (polar residues); sequence ESMSTQQNGSAQKPVTLNGSASTKG. 2 N-linked (GlcNAc...) asparagine glycosylation sites follow: Asn-16 and Asn-26. The next 5 helical transmembrane spans lie at 45 to 65, 95 to 115, 132 to 152, 161 to 181, and 185 to 205; these read LIQL…WGVL, IVLN…YLYF, ILFP…FGYA, TFIL…LTIF, and YPLY…TFTL. The N-linked (GlcNAc...) asparagine glycan is linked to Asn-221. Residues 223-243 form a helical membrane-spanning segment; the sequence is SGSSLYGIFLLSINLLLDGLT. A glycan (N-linked (GlcNAc...) asparagine) is linked at Asn-244. 3 helical membrane-spanning segments follow: residues 281-301, 325-345, and 368-388; these read LLVM…PIPI, NVLG…YTLS, and VFWF…LVFG.

This sequence belongs to the nucleotide-sugar transporter family. SLC35B subfamily.

Its subcellular location is the endoplasmic reticulum membrane. Functionally, may be involved in specific transport of UDP-Gal from the cytosol to the Golgi lumen. Involved in the maintenance of optimal conditions for the folding of secretory pathway proteins in the endoplasmic reticulum. This is UDP-galactose transporter homolog 1 (hut1) from Aspergillus fumigatus (strain ATCC MYA-4609 / CBS 101355 / FGSC A1100 / Af293) (Neosartorya fumigata).